The chain runs to 487 residues: Serine carboxypeptidase-like 38 (487 aa).

A signal peptide spans 1–20 (MGKQQDWSVTACIFLSLSLA). 3 cysteine pairs are disulfide-bonded: Cys119–Cys368, Cys280–Cys290, and Cys315–Cys336. Ser215 is an active-site residue. An N-linked (GlcNAc...) asparagine glycan is attached at Asn233. Residues Asn317 and Asn357 are each glycosylated (N-linked (GlcNAc...) asparagine). Residue Asp407 is part of the active site. N-linked (GlcNAc...) asparagine glycans are attached at residues Asn423 and Asn449. Residue His460 is part of the active site.

Belongs to the peptidase S10 family. Expressed in seedlings, roots, leaves, flowers and siliques.

The protein resides in the secreted. In terms of biological role, probable carboxypeptidase. The polypeptide is Serine carboxypeptidase-like 38 (SCPL38) (Arabidopsis thaliana (Mouse-ear cress)).